The following is a 457-amino-acid chain: Vasoactive intestinal polypeptide receptor (457 aa).

The signal sequence occupies residues 1–19 (MGLVEVVWWWRWRFGGGGG). Residues 20–141 (GLVVEVEVWW…KEQTAFYGTV (122 aa)) are Extracellular-facing. 3 disulfide bridges follow: Cys-51–Cys-73, Cys-64–Cys-105, and Cys-87–Cys-122. N-linked (GlcNAc...) asparagine glycosylation is found at Asn-59, Asn-70, Asn-100, and Asn-104. A helical membrane pass occupies residues 142–166 (KTGYTIGHTLSLIALTAAMIILCLF). The Cytoplasmic portion of the chain corresponds to 167-173 (RKLHCTR). A helical membrane pass occupies residues 174-193 (NYIHMHLFMSFIMRAIAVFI). The Extracellular segment spans residues 194 to 215 (KDVTLFESGEPEHCFVSSVGCK). Residues Cys-214 and Cys-284 are joined by a disulfide bond. A helical transmembrane segment spans residues 216 to 239 (AMMVFFQYCVMANFFWLLVEGLYL). At 240–253 (HTLLVISFFSERKY) the chain is on the cytoplasmic side. A helical membrane pass occupies residues 254–275 (FWWYILIGWGAPSVFITAWTVV). At 276–292 (RIYFFNVGCWEEIIESP) the chain is on the extracellular side. The chain crosses the membrane as a helical span at residues 293–316 (IWWIIKTPILVSILVNFILFICII). The Cytoplasmic portion of the chain corresponds to 317–341 (RILVQKLHSPDVGHNETSQYSRLAK). A helical membrane pass occupies residues 342-361 (STLLLIPLFGIHYIMFAFFP). Residues 362 to 373 (DNFKAQVKLVFE) are Extracellular-facing. Residues 374–393 (LVVGSFQGFVVAVLYCFLNG) form a helical membrane-spanning segment. Residues 394–457 (EVQAELKRKW…SSFQAEFSLV (64 aa)) are Cytoplasmic-facing.

Belongs to the G-protein coupled receptor 2 family. As to expression, expressed in pituitary, hypothalamus, small intestine and ovarian follicles.

Its subcellular location is the cell membrane. This is a receptor for VIP. The activity of this receptor is mediated by G proteins which activate adenylyl cyclase. In Meleagris gallopavo (Wild turkey), this protein is Vasoactive intestinal polypeptide receptor (VIPR1).